Reading from the N-terminus, the 873-residue chain is Leucine--tRNA ligase (873 aa).

Residues P43–H53 carry the 'HIGH' region motif. The 'KMSKS' region signature appears at T624–S628. Position 627 (K627) interacts with ATP.

Belongs to the class-I aminoacyl-tRNA synthetase family.

The protein localises to the cytoplasm. It carries out the reaction tRNA(Leu) + L-leucine + ATP = L-leucyl-tRNA(Leu) + AMP + diphosphate. The sequence is that of Leucine--tRNA ligase from Synechococcus sp. (strain JA-3-3Ab) (Cyanobacteria bacterium Yellowstone A-Prime).